Here is an 87-residue protein sequence, read N- to C-terminus: Putative regulatory protein syc0519_c (87 aa).

Belongs to the RemA family.

The chain is Putative regulatory protein syc0519_c from Synechococcus sp. (strain ATCC 27144 / PCC 6301 / SAUG 1402/1) (Anacystis nidulans).